Here is a 1937-residue protein sequence, read N- to C-terminus: Myosin-2 (1937 aa).

The region spanning 33–82 is the Myosin N-terminal SH3-like domain; the sequence is DAKTSVFVAEPKESFVKGTIQSREGGKVTVKTDAGATLTVKEDQVFPMNP. 2 positions are modified to phosphothreonine: T64 and T69. The Myosin motor domain maps to 86-780; that stretch reads DKIEDMAMMT…LLGLLEEMRD (695 aa). Position 130 is an N6,N6,N6-trimethyllysine (K130). An ATP-binding site is contributed by 179–186; the sequence is GESGAGKT. Phosphotyrosine is present on Y387. Phosphothreonine is present on T417. The residue at position 623 (S623) is a Phosphoserine. The segment at 657–679 is actin-binding; the sequence is LNKLMTNLRSTHPHFVRCIIPNE. H755 is modified (pros-methylhistidine). Residues 759–773 are actin-binding; the sequence is KFGHTKVFFKAGLLG. Residues 783–812 enclose the IQ domain; it reads LAQIITRTQARCRGFLARVEYQKMVERRES. Residues 841–1937 adopt a coiled-coil conformation; the sequence is LLKSAETEKE…EVHTKIISEE (1097 aa). S1094 is subject to Phosphoserine. Disordered stretches follow at residues 1124–1145 and 1151–1170; these read IEAERASRAKAEKQRSDLSREL and RLEEAGGATSAQIEMNKKRE. The span at 1126–1145 shows a compositional bias: basic and acidic residues; sequence AERASRAKAEKQRSDLSREL. S1160 and S1235 each carry phosphoserine. A Phosphothreonine modification is found at T1239. At S1241 the chain carries Phosphoserine. Phosphothreonine is present on T1253. S1259 is modified (phosphoserine). T1284 is modified (phosphothreonine). A phosphoserine mark is found at S1290, S1301, and S1304. A Phosphotyrosine modification is found at Y1462. At T1465 the chain carries Phosphothreonine. Residue S1472 is modified to Phosphoserine. Y1490 carries the post-translational modification Phosphotyrosine. S1493 is subject to Phosphoserine. T1499 is subject to Phosphothreonine. The residue at position 1512 (S1512) is a Phosphoserine. Phosphothreonine is present on T1515. Phosphoserine is present on residues S1540, S1552, S1572, S1712, and S1724. Phosphothreonine occurs at positions 1728 and 1734. A Phosphoserine modification is found at S1737. Residues 1883-1913 are disordered; it reads QAEEAEEQSNTNLSKFRKLQHELEEAEERAD.

This sequence belongs to the TRAFAC class myosin-kinesin ATPase superfamily. Myosin family. In terms of assembly, muscle myosin is a hexameric protein that consists of 2 heavy chain subunits (MHC), 2 alkali light chain subunits (MLC) and 2 regulatory light chain subunits (MLC-2). Interacts with GCSAM.

The protein resides in the cytoplasm. It localises to the myofibril. Myosins are actin-based motor molecules with ATPase activity essential for muscle contraction. The polypeptide is Myosin-2 (MYH2) (Equus caballus (Horse)).